A 132-amino-acid chain; its full sequence is Small ribosomal subunit protein uS8 (132 aa).

It belongs to the universal ribosomal protein uS8 family. In terms of assembly, part of the 30S ribosomal subunit. Contacts proteins S5 and S12.

Its function is as follows. One of the primary rRNA binding proteins, it binds directly to 16S rRNA central domain where it helps coordinate assembly of the platform of the 30S subunit. This chain is Small ribosomal subunit protein uS8, found in Rickettsia bellii (strain OSU 85-389).